The following is a 925-amino-acid chain: Isoleucine--tRNA ligase (925 aa).

The 'HIGH' region signature appears at 57–67; sequence PYANGDIHIGH. Residue Glu553 coordinates L-isoleucyl-5'-AMP. Residues 594–598 carry the 'KMSKS' region motif; that stretch reads KMSKS. Lys597 provides a ligand contact to ATP. Zn(2+)-binding residues include Cys889, Cys892, Cys909, and Cys912.

Belongs to the class-I aminoacyl-tRNA synthetase family. IleS type 1 subfamily. In terms of assembly, monomer. Zn(2+) is required as a cofactor.

It localises to the cytoplasm. The catalysed reaction is tRNA(Ile) + L-isoleucine + ATP = L-isoleucyl-tRNA(Ile) + AMP + diphosphate. Functionally, catalyzes the attachment of isoleucine to tRNA(Ile). As IleRS can inadvertently accommodate and process structurally similar amino acids such as valine, to avoid such errors it has two additional distinct tRNA(Ile)-dependent editing activities. One activity is designated as 'pretransfer' editing and involves the hydrolysis of activated Val-AMP. The other activity is designated 'posttransfer' editing and involves deacylation of mischarged Val-tRNA(Ile). This Brevibacillus brevis (strain 47 / JCM 6285 / NBRC 100599) protein is Isoleucine--tRNA ligase.